The chain runs to 487 residues: 6-phosphogluconate dehydrogenase, decarboxylating 3, chloroplastic (487 aa).

Residue Met-1 is modified to N-acetylmethionine. NADP(+) is bound by residues 13-18 (GLAVMG), 36-38 (NRT), 80-82 (VKA), and Asn-108. Substrate-binding positions include Asn-108 and 134–136 (SGG). Lys-188 acts as the Proton acceptor in catalysis. 191-192 (HN) lines the substrate pocket. The active-site Proton donor is Glu-195. Substrate is bound by residues Tyr-196, Lys-266, Arg-293, Arg-458, and His-464.

Belongs to the 6-phosphogluconate dehydrogenase family. As to quaternary structure, forms homodimer. Forms heterodimers with PGD1 or PGD2.

The protein localises to the plastid. It localises to the chloroplast. The protein resides in the cytoplasm. It is found in the cytosol. It carries out the reaction 6-phospho-D-gluconate + NADP(+) = D-ribulose 5-phosphate + CO2 + NADPH. Its pathway is carbohydrate degradation; pentose phosphate pathway; D-ribulose 5-phosphate from D-glucose 6-phosphate (oxidative stage): step 3/3. Catalyzes the oxidative decarboxylation of 6-phosphogluconate to ribulose 5-phosphate and CO(2), with concomitant reduction of NADP to NADPH. This Arabidopsis thaliana (Mouse-ear cress) protein is 6-phosphogluconate dehydrogenase, decarboxylating 3, chloroplastic.